A 632-amino-acid chain; its full sequence is tRNA uridine 5-carboxymethylaminomethyl modification enzyme MnmG (632 aa).

13–18 serves as a coordination point for FAD; sequence GGGHAG. An NAD(+)-binding site is contributed by 274–288; it reads GPRYCPSIEDKVMRF.

Belongs to the MnmG family. As to quaternary structure, homodimer. Heterotetramer of two MnmE and two MnmG subunits. It depends on FAD as a cofactor.

It is found in the cytoplasm. Functionally, NAD-binding protein involved in the addition of a carboxymethylaminomethyl (cmnm) group at the wobble position (U34) of certain tRNAs, forming tRNA-cmnm(5)s(2)U34. The polypeptide is tRNA uridine 5-carboxymethylaminomethyl modification enzyme MnmG (Dichelobacter nodosus (strain VCS1703A)).